Reading from the N-terminus, the 202-residue chain is MEGTVFTPCLEGMKHVKSDQGEMLTKPFLELCKTILPVIDKFGAAMTLVKSDIGGNITRLEKNYLSDPDKFKYLYTFVQVEIESKIAKGSSSCTNGLLWLTRAMDFLVELFRNLVAHQDWSMPQACADSYQKTLKKWHGWLASSTFSMALKLAPDRKKFMDVISGSGNIQADMERFCAEFGPFLHDNHKFLASVGMDDMKAS.

Residues aspartate 52, asparagine 56, tryptophan 99, and histidine 138 each contribute to the a ganglioside GM3 (d18:1(4E)) site.

Belongs to the GLTP family.

Functionally, may be involved in glycolipids transfer. The sequence is that of Glycolipid transfer protein 1 from Arabidopsis thaliana (Mouse-ear cress).